The primary structure comprises 194 residues: Peptidyl-tRNA hydrolase (194 aa).

Tyrosine 17 contributes to the tRNA binding site. Histidine 22 functions as the Proton acceptor in the catalytic mechanism. 3 residues coordinate tRNA: tyrosine 69, asparagine 71, and asparagine 117.

Belongs to the PTH family. Monomer.

The protein localises to the cytoplasm. It carries out the reaction an N-acyl-L-alpha-aminoacyl-tRNA + H2O = an N-acyl-L-amino acid + a tRNA + H(+). Its function is as follows. Hydrolyzes ribosome-free peptidyl-tRNAs (with 1 or more amino acids incorporated), which drop off the ribosome during protein synthesis, or as a result of ribosome stalling. Functionally, catalyzes the release of premature peptidyl moieties from peptidyl-tRNA molecules trapped in stalled 50S ribosomal subunits, and thus maintains levels of free tRNAs and 50S ribosomes. This Paenarthrobacter aurescens (strain TC1) protein is Peptidyl-tRNA hydrolase.